Reading from the N-terminus, the 83-residue chain is Large ribosomal subunit protein bL31B (83 aa).

The protein belongs to the bacterial ribosomal protein bL31 family. Type B subfamily. Part of the 50S ribosomal subunit.

This is Large ribosomal subunit protein bL31B from Lactobacillus johnsonii (strain CNCM I-12250 / La1 / NCC 533).